Here is a 281-residue protein sequence, read N- to C-terminus: Sulfur carrier protein FdhD (281 aa).

Cys-117 serves as the catalytic Cysteine persulfide intermediate.

It belongs to the FdhD family.

It is found in the cytoplasm. Its function is as follows. Required for formate dehydrogenase (FDH) activity. Acts as a sulfur carrier protein that transfers sulfur from IscS to the molybdenum cofactor prior to its insertion into FDH. The sequence is that of Sulfur carrier protein FdhD from Xanthomonas axonopodis pv. citri (strain 306).